We begin with the raw amino-acid sequence, 271 residues long: Short-chain type dehydrogenase/reductase (271 aa).

NAD(+) is bound at residue 25-49 (IVTGASRGIGREIALNMAEKGAKVV). Serine 166 contacts substrate. The active-site Proton acceptor is tyrosine 179.

This sequence belongs to the short-chain dehydrogenases/reductases (SDR) family.

The sequence is that of Short-chain type dehydrogenase/reductase from Picea abies (Norway spruce).